Consider the following 306-residue polypeptide: MTASLHIILDTDPGIDDAAAIAAALFAPQLDLQLITTVAGNVSVEKTTRNALQLLHFWNSDIPLAQGAATPLLRPLRDAAYVHGESGMEGYDFVDHQRQPLAKPAFIAIRDVLMNAPEPMTLVAIGPLTNIALLLMHYPECACNIRRLVLMGGSAGRGNFTPNAEFNIAVDPEAAALVFRSGLEIVMCGLDVTNQAMLSPDFLNKLPALNRTGKMLHSLFNHYRSGSMRTGVRMHDLCAIAWLVRPELFTLQSCFVAVETQGQYTAGTTVVDIEGRLGQPANAQVALALDVDGFRQWVAEVFACAP.

Residue His235 is part of the active site.

The protein belongs to the IUNH family. RihC subfamily.

Its function is as follows. Hydrolyzes both purine and pyrimidine ribonucleosides with a broad-substrate specificity. This Salmonella heidelberg (strain SL476) protein is Non-specific ribonucleoside hydrolase RihC.